Here is a 414-residue protein sequence, read N- to C-terminus: Ribulose bisphosphate carboxylase large chain (414 aa).

Residues N102 and T152 each contribute to the substrate site. The active-site Proton acceptor is K154. K156 is a substrate binding site. Residues K180, D182, and E183 each coordinate Mg(2+). Position 180 is an N6-carboxylysine (K180). H273 functions as the Proton acceptor in the catalytic mechanism. 3 residues coordinate substrate: R274, H306, and S358.

The protein belongs to the RuBisCO large chain family. Type I subfamily. Heterohexadecamer of 8 large chains and 8 small chains; disulfide-linked. The disulfide link is formed within the large subunit homodimers. It depends on Mg(2+) as a cofactor. Post-translationally, the disulfide bond which can form in the large chain dimeric partners within the hexadecamer appears to be associated with oxidative stress and protein turnover.

It is found in the plastid. The protein localises to the chloroplast. It carries out the reaction 2 (2R)-3-phosphoglycerate + 2 H(+) = D-ribulose 1,5-bisphosphate + CO2 + H2O. The enzyme catalyses D-ribulose 1,5-bisphosphate + O2 = 2-phosphoglycolate + (2R)-3-phosphoglycerate + 2 H(+). In terms of biological role, ruBisCO catalyzes two reactions: the carboxylation of D-ribulose 1,5-bisphosphate, the primary event in carbon dioxide fixation, as well as the oxidative fragmentation of the pentose substrate in the photorespiration process. Both reactions occur simultaneously and in competition at the same active site. The sequence is that of Ribulose bisphosphate carboxylase large chain (rbcL) from Antrophyum reticulatum (Ox-tongue fern).